A 356-amino-acid chain; its full sequence is Cyanuric acid amidohydrolase (356 aa).

The tract at residues 1–99 (MPIAKVHRIA…FLVFERAEGN (99 aa)) is RU A. Substrate contacts are provided by residues Arg52 and 79–80 (SG). The segment at 106–243 (ALAIGRAHTP…HEIVVLGMSE (138 aa)) is RU B. Lys156 is a catalytic residue. Substrate contacts are provided by residues Arg188 and 226–227 (SS). The active-site Nucleophile is Ser226. Residues 249–356 (LAIAHGVMAD…VAVIAARTMG (108 aa)) are RU C. Glu287 contacts Mg(2+). Substrate is bound by residues Arg314 and 333–334 (SG). Mg(2+) is bound by residues Gly336, Gln339, Gly340, Pro341, and Gly344.

This sequence belongs to the cyclic amide hydrolase (CyAH) family. As to quaternary structure, homotetramer.

The catalysed reaction is cyanurate + H2O = 1-carboxybiuret + H(+). It functions in the pathway xenobiotic degradation; atrazine degradation; biuret from cyanurate: step 1/1. Inhibited by barbituric acid. Responsible for the hydrolysis of cyanuric acid, an intermediate formed during catabolism of s-triazine based compounds in herbicides such as atrazine and polymers such as melamine. Catalyzes the hydrolytic opening of the s-triazine ring of cyanuric acid (2,4,6-trihydroxy-s-triazine) to yield carbon dioxide and carboxybiuret, which spontaneously decarboxylates to biuret. This Azorhizobium caulinodans (strain ATCC 43989 / DSM 5975 / JCM 20966 / LMG 6465 / NBRC 14845 / NCIMB 13405 / ORS 571) protein is Cyanuric acid amidohydrolase.